The chain runs to 471 residues: Protoheme IX farnesyltransferase, mitochondrial (471 aa).

The N-terminal 60 residues, M1–I60, are a transit peptide targeting the mitochondrion. Transmembrane regions (helical) follow at residues A188–A208, I247–L267, I287–A307, L312–F332, L368–V388, and K430–K450.

The protein belongs to the UbiA prenyltransferase family.

Its subcellular location is the mitochondrion membrane. The catalysed reaction is heme b + (2E,6E)-farnesyl diphosphate + H2O = Fe(II)-heme o + diphosphate. Converts protoheme IX and farnesyl diphosphate to heme O. The protein is Protoheme IX farnesyltransferase, mitochondrial (COX10) of Yarrowia lipolytica (strain CLIB 122 / E 150) (Yeast).